The chain runs to 243 residues: Large ribosomal subunit protein uL30 (243 aa).

Positions 1-31 are disordered; the sequence is MADKILTPESQLKKSKAQQKSAEQVAAERAA. Over residues 18–28 the composition is skewed to low complexity; sequence QQKSAEQVAAE.

The protein belongs to the universal ribosomal protein uL30 family.

This is Large ribosomal subunit protein uL30 (RPL7) from Eremothecium gossypii (strain ATCC 10895 / CBS 109.51 / FGSC 9923 / NRRL Y-1056) (Yeast).